The sequence spans 426 residues: Protein arginine methyltransferase NDUFAF7 homolog, mitochondrial (426 aa).

The protein belongs to the NDUFAF7 family.

It is found in the mitochondrion. The catalysed reaction is L-arginyl-[protein] + 2 S-adenosyl-L-methionine = N(omega),N(omega)'-dimethyl-L-arginyl-[protein] + 2 S-adenosyl-L-homocysteine + 2 H(+). Functionally, arginine methyltransferase involved in the assembly or stability of mitochondrial NADH:ubiquinone oxidoreductase complex (complex I). In Caenorhabditis elegans, this protein is Protein arginine methyltransferase NDUFAF7 homolog, mitochondrial.